Reading from the N-terminus, the 295-residue chain is 5'-adenylylsulfate reductase-like 6 (295 aa).

The first 22 residues, 1–22 (MEKKLTLLLLVVVVLFVNLTNA), serve as a signal peptide directing secretion. Residues 23–161 (TVRVQICPRE…LVAFYTDVTG (139 aa)) enclose the Thioredoxin domain. A glycan (N-linked (GlcNAc...) asparagine) is linked at asparagine 136. The chain crosses the membrane as a helical span at residues 208–228 (ATVFVLLRLLHLISPTMVVFV).

Its subcellular location is the membrane. This Arabidopsis thaliana (Mouse-ear cress) protein is 5'-adenylylsulfate reductase-like 6 (APRL6).